A 335-amino-acid chain; its full sequence is MISLRDIVEKLFNSEDLNYKESYQLFDYFIKGQIELPLQTSILIALKLKQETSTEIAAAVEALLDNTKEFPKINGDLAGIVGTGGDGFNTINISTTAAIVAAAAGYKVAKHGGRSVSSKSGSFDLLESFGVNIELSPQQTKECLELYNLGFLFAPFYSEGFRYIKEARTILKTRTIFNILGPLINPARPNKVVIGVYSKDLILPMAKTLINLGIDRAVVVYGSGLDEVAIHDDTYVAEIQNNQITEYKVSPVDFGIDTYAIKDLEGGLPEHNREIIKQILQGKGKQAHNAAVAVNVAMLMKLYGKDNLKQNTQEILELIKSGKCYQTLQNVISFG.

5-phospho-alpha-D-ribose 1-diphosphate is bound by residues glycine 82, glycine 85–aspartate 86, threonine 90, asparagine 92–threonine 95, lysine 110–serine 118, and serine 122. Glycine 82 contributes to the anthranilate binding site. Serine 94 contacts Mg(2+). Arginine 168 provides a ligand contact to anthranilate. The Mg(2+) site is built by aspartate 226 and glutamate 227.

It belongs to the anthranilate phosphoribosyltransferase family. In terms of assembly, homodimer. Mg(2+) serves as cofactor.

The enzyme catalyses N-(5-phospho-beta-D-ribosyl)anthranilate + diphosphate = 5-phospho-alpha-D-ribose 1-diphosphate + anthranilate. It participates in amino-acid biosynthesis; L-tryptophan biosynthesis; L-tryptophan from chorismate: step 2/5. Its function is as follows. Catalyzes the transfer of the phosphoribosyl group of 5-phosphorylribose-1-pyrophosphate (PRPP) to anthranilate to yield N-(5'-phosphoribosyl)-anthranilate (PRA). The protein is Anthranilate phosphoribosyltransferase of Francisella philomiragia subsp. philomiragia (strain ATCC 25017 / CCUG 19701 / FSC 153 / O#319-036).